A 90-amino-acid chain; its full sequence is Small ribosomal subunit protein uS19 (90 aa).

This sequence belongs to the universal ribosomal protein uS19 family.

Protein S19 forms a complex with S13 that binds strongly to the 16S ribosomal RNA. The sequence is that of Small ribosomal subunit protein uS19 from Thioalkalivibrio sulfidiphilus (strain HL-EbGR7).